Consider the following 81-residue polypeptide: Small ribosomal subunit protein eS21 (81 aa).

The protein belongs to the eukaryotic ribosomal protein eS21 family.

This chain is Small ribosomal subunit protein eS21 (RPS21), found in Zea mays (Maize).